The sequence spans 323 residues: Prenyl transferase (323 aa).

Isopentenyl diphosphate contacts are provided by Lys-46, Arg-49, and His-81. Residues Asp-88 and Asp-92 each contribute to the Mg(2+) site. Residue Arg-97 participates in an all-trans-polyprenyl diphosphate binding. An isopentenyl diphosphate-binding site is contributed by Arg-98. 3 residues coordinate an all-trans-polyprenyl diphosphate: Lys-174, Thr-175, and Gln-212.

This sequence belongs to the FPP/GGPP synthase family. It depends on Mg(2+) as a cofactor.

The protein resides in the plastid. It localises to the chloroplast. Functionally, possible role in synthesis of the nonaprenyl side chain of plastoquinone or in synthesis of other prenyl chains such as undekaprenyl pyrophosphate. The chain is Prenyl transferase (preA) from Cyanidium caldarium (Red alga).